A 510-amino-acid polypeptide reads, in one-letter code: GMP synthase [glutamine-hydrolyzing] (510 aa).

In terms of domain architecture, Glutamine amidotransferase type-1 spans 5-195 (LVLVVDFGGQ…LFNVCNLKGD (191 aa)). Residue C82 is the Nucleophile of the active site. Residues H169 and E171 contribute to the active site. A GMPS ATP-PPase domain is found at 196–385 (WSMSSFAEQQ…LGIPHKLVWR (190 aa)). An ATP-binding site is contributed by 223–229 (SGGVDSS).

As to quaternary structure, homodimer.

The catalysed reaction is XMP + L-glutamine + ATP + H2O = GMP + L-glutamate + AMP + diphosphate + 2 H(+). It participates in purine metabolism; GMP biosynthesis; GMP from XMP (L-Gln route): step 1/1. Catalyzes the synthesis of GMP from XMP. The chain is GMP synthase [glutamine-hydrolyzing] from Clostridium botulinum (strain Okra / Type B1).